We begin with the raw amino-acid sequence, 429 residues long: Probable M18 family aminopeptidase 2 (429 aa).

His82, His156, and His401 together coordinate Zn(2+).

It belongs to the peptidase M18 family. Zn(2+) is required as a cofactor.

The chain is Probable M18 family aminopeptidase 2 from Pseudomonas fluorescens (strain Pf0-1).